Reading from the N-terminus, the 264-residue chain is Thiazole synthase (264 aa).

K101 (schiff-base intermediate with DXP) is an active-site residue. Residues G162, A189–G190, and N211–T212 each bind 1-deoxy-D-xylulose 5-phosphate. Positions K245–Q264 are disordered.

It belongs to the ThiG family. Homotetramer. Forms heterodimers with either ThiH or ThiS.

Its subcellular location is the cytoplasm. The catalysed reaction is [ThiS sulfur-carrier protein]-C-terminal-Gly-aminoethanethioate + 2-iminoacetate + 1-deoxy-D-xylulose 5-phosphate = [ThiS sulfur-carrier protein]-C-terminal Gly-Gly + 2-[(2R,5Z)-2-carboxy-4-methylthiazol-5(2H)-ylidene]ethyl phosphate + 2 H2O + H(+). The protein operates within cofactor biosynthesis; thiamine diphosphate biosynthesis. Functionally, catalyzes the rearrangement of 1-deoxy-D-xylulose 5-phosphate (DXP) to produce the thiazole phosphate moiety of thiamine. Sulfur is provided by the thiocarboxylate moiety of the carrier protein ThiS. In vitro, sulfur can be provided by H(2)S. The polypeptide is Thiazole synthase (Cellvibrio japonicus (strain Ueda107) (Pseudomonas fluorescens subsp. cellulosa)).